A 79-amino-acid polypeptide reads, in one-letter code: uncharacterized protein (79 aa).

Positions 1 to 19 are cleaved as a signal peptide; the sequence is MKYVALAFVLSLVILQISA.

In terms of tissue distribution, nacreous layer of shell (at protein level). Expressed primarily in the mantle with highest level in the mantle pallium and lower level in the mantle edge.

Its subcellular location is the secreted. This is an uncharacterized protein from Pinctada maxima (Silver-lipped pearl oyster).